We begin with the raw amino-acid sequence, 340 residues long: MNPFLKYGITTGLAAAAAAKAAALYSKGIVPKSVTVPTPIGLRVEVFVERVFQRGEIYCAEVRKFSGDNPDVLNGVIIRACVRPLNNGVVIKGGEGVGIVTRPGLPVPPGEHAINPVPRRMIEEAVREVLEGAEVLVEVPDGKLLAEKTMNPRLGIVGGISILGTTGIEAPVSADEFLGHIEAELSALRERRDIAILAQGNTSYKAAQAVFGDVVVKIGDMVGYAVEKAAALGYKAAYLFTMPGKLAKLALGAYNTHSAQCDGRVEAVLYALVKLRAPYEVLLEVSNAASVGEALAKAGDYAGGVIAIMARRAKEYLERFKIPVEIYVVNDKGEVLFSTT.

Belongs to the CbiD family.

It carries out the reaction Co-precorrin-5B + S-adenosyl-L-methionine = Co-precorrin-6A + S-adenosyl-L-homocysteine. Its pathway is cofactor biosynthesis; adenosylcobalamin biosynthesis; cob(II)yrinate a,c-diamide from sirohydrochlorin (anaerobic route): step 6/10. Its function is as follows. Catalyzes the methylation of C-1 in cobalt-precorrin-5B to form cobalt-precorrin-6A. This is Cobalt-precorrin-5B C(1)-methyltransferase from Pyrobaculum aerophilum (strain ATCC 51768 / DSM 7523 / JCM 9630 / CIP 104966 / NBRC 100827 / IM2).